The sequence spans 294 residues: ATP synthase gamma chain (294 aa).

The protein belongs to the ATPase gamma chain family. F-type ATPases have 2 components, CF(1) - the catalytic core - and CF(0) - the membrane proton channel. CF(1) has five subunits: alpha(3), beta(3), gamma(1), delta(1), epsilon(1). CF(0) has three main subunits: a, b and c.

The protein localises to the cell inner membrane. Its function is as follows. Produces ATP from ADP in the presence of a proton gradient across the membrane. The gamma chain is believed to be important in regulating ATPase activity and the flow of protons through the CF(0) complex. The chain is ATP synthase gamma chain from Paraburkholderia xenovorans (strain LB400).